The primary structure comprises 294 residues: UDP-3-O-acyl-N-acetylglucosamine deacetylase (294 aa).

Zn(2+)-binding residues include His-75, His-232, and Asp-236. The active-site Proton donor is the His-259.

It belongs to the LpxC family. Requires Zn(2+) as cofactor.

The catalysed reaction is a UDP-3-O-[(3R)-3-hydroxyacyl]-N-acetyl-alpha-D-glucosamine + H2O = a UDP-3-O-[(3R)-3-hydroxyacyl]-alpha-D-glucosamine + acetate. Its pathway is glycolipid biosynthesis; lipid IV(A) biosynthesis; lipid IV(A) from (3R)-3-hydroxytetradecanoyl-[acyl-carrier-protein] and UDP-N-acetyl-alpha-D-glucosamine: step 2/6. Its function is as follows. Catalyzes the hydrolysis of UDP-3-O-myristoyl-N-acetylglucosamine to form UDP-3-O-myristoylglucosamine and acetate, the committed step in lipid A biosynthesis. In Sulfurovum sp. (strain NBC37-1), this protein is UDP-3-O-acyl-N-acetylglucosamine deacetylase.